An 88-amino-acid chain; its full sequence is Small ribosomal subunit protein uS19 (88 aa).

The protein belongs to the universal ribosomal protein uS19 family.

Protein S19 forms a complex with S13 that binds strongly to the 16S ribosomal RNA. This chain is Small ribosomal subunit protein uS19 (rpsS), found in Chlamydia muridarum (strain MoPn / Nigg).